The primary structure comprises 73 residues: Conotoxin Leo-O2 (73 aa).

The signal sequence occupies residues 1 to 22; sequence MKLTCVLIIAVLFLTACQLVTA. Residues 23–47 constitute a propeptide that is removed on maturation; that stretch reads DYSGDEQQYRAMRLIDAMRNFGDTR. Intrachain disulfides connect cysteine 49–cysteine 59, cysteine 56–cysteine 64, and cysteine 58–cysteine 69.

This sequence belongs to the conotoxin O1 superfamily. As to expression, expressed by the venom duct.

The protein localises to the secreted. The protein is Conotoxin Leo-O2 of Conus leopardus (Leopard cone).